A 304-amino-acid chain; its full sequence is tRNA dimethylallyltransferase (304 aa).

9-16 lines the ATP pocket; it reads APTAAGKS. 11-16 is a binding site for substrate; it reads TAAGKS.

It belongs to the IPP transferase family. Monomer. Mg(2+) is required as a cofactor.

The catalysed reaction is adenosine(37) in tRNA + dimethylallyl diphosphate = N(6)-dimethylallyladenosine(37) in tRNA + diphosphate. Functionally, catalyzes the transfer of a dimethylallyl group onto the adenine at position 37 in tRNAs that read codons beginning with uridine, leading to the formation of N6-(dimethylallyl)adenosine (i(6)A). This Deinococcus geothermalis (strain DSM 11300 / CIP 105573 / AG-3a) protein is tRNA dimethylallyltransferase.